The following is a 514-amino-acid chain: Tryptophan decarboxylase 1 (514 aa).

Phe-104 provides a ligand contact to serotonin. Pyridoxal 5'-phosphate is bound by residues Thr-175 and Ser-176. His-214 serves as a coordination point for serotonin. Thr-273 is a pyridoxal 5'-phosphate binding site. Lys-330 bears the N6-(pyridoxal phosphate)lysine mark. The active-site Proton donor is Tyr-359. The pyridoxal 5'-phosphate site is built by Val-380 and Gly-381.

It belongs to the group II decarboxylase family. Forms homodimers. Pyridoxal 5'-phosphate serves as cofactor.

It catalyses the reaction L-tryptophan + H(+) = tryptamine + CO2. The enzyme catalyses 5-hydroxy-L-tryptophan + H(+) = serotonin + CO2. Involved in serotonin biosynthesis. Catalyzes the decarboxylation of L-tryptophan to produce tryptamine, which is converted to serotonin by tryptamine 5-hydroxylase. May play a major role in serotonin biosynthesis during senescence. Accumulation of serotonin attenuates leaf senescence. Catalyzes the decarboxylation of 5-hydroxy-L-tryptophan to produce serotonin. This chain is Tryptophan decarboxylase 1, found in Oryza sativa subsp. japonica (Rice).